A 445-amino-acid polypeptide reads, in one-letter code: tRNA(Ile)-lysidine synthase (445 aa).

Residue 33–38 coordinates ATP; that stretch reads SGGLDS.

This sequence belongs to the tRNA(Ile)-lysidine synthase family.

The protein localises to the cytoplasm. The catalysed reaction is cytidine(34) in tRNA(Ile2) + L-lysine + ATP = lysidine(34) in tRNA(Ile2) + AMP + diphosphate + H(+). Functionally, ligates lysine onto the cytidine present at position 34 of the AUA codon-specific tRNA(Ile) that contains the anticodon CAU, in an ATP-dependent manner. Cytidine is converted to lysidine, thus changing the amino acid specificity of the tRNA from methionine to isoleucine. In Pseudomonas syringae pv. tomato (strain ATCC BAA-871 / DC3000), this protein is tRNA(Ile)-lysidine synthase.